We begin with the raw amino-acid sequence, 225 residues long: NAD(P)H-quinone oxidoreductase subunit K, chloroplastic (225 aa).

Residues Cys-43, Cys-44, Cys-108, and Cys-139 each coordinate [4Fe-4S] cluster.

The protein belongs to the complex I 20 kDa subunit family. NDH is composed of at least 16 different subunits, 5 of which are encoded in the nucleus. [4Fe-4S] cluster is required as a cofactor.

The protein resides in the plastid. It localises to the chloroplast thylakoid membrane. The catalysed reaction is a plastoquinone + NADH + (n+1) H(+)(in) = a plastoquinol + NAD(+) + n H(+)(out). It carries out the reaction a plastoquinone + NADPH + (n+1) H(+)(in) = a plastoquinol + NADP(+) + n H(+)(out). In terms of biological role, NDH shuttles electrons from NAD(P)H:plastoquinone, via FMN and iron-sulfur (Fe-S) centers, to quinones in the photosynthetic chain and possibly in a chloroplast respiratory chain. The immediate electron acceptor for the enzyme in this species is believed to be plastoquinone. Couples the redox reaction to proton translocation, and thus conserves the redox energy in a proton gradient. The protein is NAD(P)H-quinone oxidoreductase subunit K, chloroplastic of Amborella trichopoda.